A 95-amino-acid polypeptide reads, in one-letter code: Pyrimidine/purine nucleoside phosphorylase (95 aa).

This sequence belongs to the nucleoside phosphorylase PpnP family.

It carries out the reaction a purine D-ribonucleoside + phosphate = a purine nucleobase + alpha-D-ribose 1-phosphate. The catalysed reaction is adenosine + phosphate = alpha-D-ribose 1-phosphate + adenine. It catalyses the reaction cytidine + phosphate = cytosine + alpha-D-ribose 1-phosphate. The enzyme catalyses guanosine + phosphate = alpha-D-ribose 1-phosphate + guanine. It carries out the reaction inosine + phosphate = alpha-D-ribose 1-phosphate + hypoxanthine. The catalysed reaction is thymidine + phosphate = 2-deoxy-alpha-D-ribose 1-phosphate + thymine. It catalyses the reaction uridine + phosphate = alpha-D-ribose 1-phosphate + uracil. The enzyme catalyses xanthosine + phosphate = alpha-D-ribose 1-phosphate + xanthine. Its function is as follows. Catalyzes the phosphorolysis of diverse nucleosides, yielding D-ribose 1-phosphate and the respective free bases. Can use uridine, adenosine, guanosine, cytidine, thymidine, inosine and xanthosine as substrates. Also catalyzes the reverse reactions. The protein is Pyrimidine/purine nucleoside phosphorylase of Yersinia pestis bv. Antiqua (strain Antiqua).